The sequence spans 316 residues: Olfactory receptor 2AG2 (316 aa).

Residues 1-30 (MELRNSTLGSGFILVGILNDSGSPELLYAT) lie on the Extracellular side of the membrane. N-linked (GlcNAc...) asparagine glycosylation is found at Asn5 and Asn19. A helical membrane pass occupies residues 31–51 (FTILYMLALTSNGLLLLAITI). Over 52–56 (EARLH) the chain is Cytoplasmic. The chain crosses the membrane as a helical span at residues 57–77 (MPMYLLLGQLSLMDLLFTSVV). Over 78–97 (TPKALADFLRRENTISFGGC) the chain is Extracellular. Cysteines 97 and 179 form a disulfide. Residues 98-118 (ALQMFLALTMGSAEDLLLAFM) form a helical membrane-spanning segment. The Cytoplasmic portion of the chain corresponds to 119-139 (AYDRYVAICHPLKYMTLMSPR). The chain crosses the membrane as a helical span at residues 140–160 (VCWIMVATSWILASLIAIGHT). The Extracellular portion of the chain corresponds to 161-205 (MYTMHLPFCVSWEIRHLLCEIPPLLKLACADTSRYELIIYVTGVT). The chain crosses the membrane as a helical span at residues 206–226 (FLLLPISAIVASYTLVLFTVL). At 227–244 (RMPSNEGRKKALVTCSSH) the chain is on the cytoplasmic side. The chain crosses the membrane as a helical span at residues 245–265 (LIVVGMFYGAATFMYVLPSSF). The Extracellular portion of the chain corresponds to 266 to 271 (HSPKQD). A helical transmembrane segment spans residues 272–292 (NIISVFYTIVTPALNPLIYSL). Residues 293-316 (RNKEVMRALRRVLGKYILLAHSTL) lie on the Cytoplasmic side of the membrane.

It belongs to the G-protein coupled receptor 1 family.

The protein localises to the cell membrane. In terms of biological role, odorant receptor. This Homo sapiens (Human) protein is Olfactory receptor 2AG2 (OR2AG2).